We begin with the raw amino-acid sequence, 253 residues long: Imidazole glycerol phosphate synthase subunit HisF (253 aa).

Active-site residues include Asp11 and Asp130.

This sequence belongs to the HisA/HisF family. In terms of assembly, heterodimer of HisH and HisF.

It localises to the cytoplasm. The enzyme catalyses 5-[(5-phospho-1-deoxy-D-ribulos-1-ylimino)methylamino]-1-(5-phospho-beta-D-ribosyl)imidazole-4-carboxamide + L-glutamine = D-erythro-1-(imidazol-4-yl)glycerol 3-phosphate + 5-amino-1-(5-phospho-beta-D-ribosyl)imidazole-4-carboxamide + L-glutamate + H(+). The protein operates within amino-acid biosynthesis; L-histidine biosynthesis; L-histidine from 5-phospho-alpha-D-ribose 1-diphosphate: step 5/9. IGPS catalyzes the conversion of PRFAR and glutamine to IGP, AICAR and glutamate. The HisF subunit catalyzes the cyclization activity that produces IGP and AICAR from PRFAR using the ammonia provided by the HisH subunit. The polypeptide is Imidazole glycerol phosphate synthase subunit HisF (Caldanaerobacter subterraneus subsp. tengcongensis (strain DSM 15242 / JCM 11007 / NBRC 100824 / MB4) (Thermoanaerobacter tengcongensis)).